The following is a 24-amino-acid chain: Sperm protamine P3 (24 aa).

The segment at 1–24 (RRRRRRRRHRRRRGRRGRRSRGRR) is disordered.

Testis.

It is found in the nucleus. The protein resides in the chromosome. In terms of biological role, protamines substitute for histones in the chromatin of sperm during the haploid phase of spermatogenesis. They compact sperm DNA into a highly condensed, stable and inactive complex. This is Sperm protamine P3 from Octopus vulgaris (Common octopus).